Reading from the N-terminus, the 278-residue chain is Proteolipid protein DM beta (278 aa).

The next 4 membrane-spanning stretches (helical) occupy residues 30–46 (LIAT…FCGC), 84–100 (VIYG…ILLM), 130–146 (FIML…GVTA), and 213–229 (LFIV…IAMV).

This sequence belongs to the myelin proteolipid protein family.

The protein resides in the membrane. This is Proteolipid protein DM beta from Squalus acanthias (Spiny dogfish).